A 594-amino-acid chain; its full sequence is UvrABC system protein C (594 aa).

The GIY-YIG domain maps to 14–91 (DQPGCYLMKD…IKKYDPKYNI (78 aa)). Positions 196 to 231 (KEVRSELEIKMYEASEKLEFERAKELRDQIAHIDAI) constitute a UVR domain.

This sequence belongs to the UvrC family. Interacts with UvrB in an incision complex.

Its subcellular location is the cytoplasm. In terms of biological role, the UvrABC repair system catalyzes the recognition and processing of DNA lesions. UvrC both incises the 5' and 3' sides of the lesion. The N-terminal half is responsible for the 3' incision and the C-terminal half is responsible for the 5' incision. This is UvrABC system protein C from Bacillus cereus (strain B4264).